The chain runs to 432 residues: Ribosomal protein uS12 methylthiotransferase RimO (432 aa).

One can recognise an MTTase N-terminal domain in the interval 1-112 (MKIGVVSLGC…ILNYLGLKEK (112 aa)). Residues Cys-10, Cys-46, Cys-75, Cys-134, Cys-138, and Cys-141 each contribute to the [4Fe-4S] cluster site. Residues 120 to 350 (STPRSYAYLK…MAIQRGITRK (231 aa)) enclose the Radical SAM core domain. The TRAM domain maps to 353-422 (EEFLGKEIEV…DYDLAGRDTE (70 aa)).

The protein belongs to the methylthiotransferase family. RimO subfamily. It depends on [4Fe-4S] cluster as a cofactor.

It localises to the cytoplasm. It carries out the reaction L-aspartate(89)-[ribosomal protein uS12]-hydrogen + (sulfur carrier)-SH + AH2 + 2 S-adenosyl-L-methionine = 3-methylsulfanyl-L-aspartate(89)-[ribosomal protein uS12]-hydrogen + (sulfur carrier)-H + 5'-deoxyadenosine + L-methionine + A + S-adenosyl-L-homocysteine + 2 H(+). In terms of biological role, catalyzes the methylthiolation of an aspartic acid residue of ribosomal protein uS12. This is Ribosomal protein uS12 methylthiotransferase RimO from Aquifex aeolicus (strain VF5).